Consider the following 181-residue polypeptide: Proteinase inhibitor A (181 aa).

An N-terminal signal peptide occupies residues 1–24; it reads MAASNALLLISGVLLISLAVLCHG. Intrachain disulfides connect cysteine 67–cysteine 113, cysteine 134–cysteine 143, and cysteine 136–cysteine 139.

Belongs to the protease inhibitor I3 (leguminous Kunitz-type inhibitor) family.

It localises to the secreted. In terms of biological role, possesses two reactive sites. Inhibits an equimolar amount of trypsin and chymotrypsin simultaneously, and inhibits kallikrein weakly. In Sagittaria sagittifolia (Arrowhead), this protein is Proteinase inhibitor A.